The chain runs to 664 residues: Probable urea active transporter 1 (664 aa).

16 helical membrane passes run 9-29 (SVGYGIVVGLGLGFAALMIFV), 56-76 (GLVASAVVSSWTWASTLLTSA), 86-106 (GAFWYASGACVQILLFTVLAI), 132-152 (GVFLVFAYITNILVMAMLLCG), 165-185 (TVAVCFLLPVGVIIYTMFGGI), 189-209 (FLTDYIHTVIILVILIMFSLA), 252-272 (GAIFFIINLAGNFGTVFVDNG), 290-310 (ILGGLAWFAIPWLAATTMGLV), 327-347 (MSDLEVSEGLVLPYAAIALMG), 353-373 (ATLLLVFMAVTSAASAELIAV), 395-415 (LLYTGHASLIVFGFAMSGFAT), 428-448 (YLLMGVLVCPAVVPATCVMLF), 454-474 (IAVTVSPVLGIISSIITWLVV), 496-516 (AGNVVGLLSPALYILILSIIF), 555-575 (VAALIITAAFIILWPWPMYGT), and 587-607 (WVVVGLIWIFFTVFAVGIFPL).

Belongs to the sodium:solute symporter (SSF) (TC 2.A.21) family.

It is found in the membrane. Involved in active transport of urea. The sequence is that of Probable urea active transporter 1 (dur3-1) from Schizosaccharomyces pombe (strain 972 / ATCC 24843) (Fission yeast).